Consider the following 153-residue polypeptide: 3-hydroxyacyl-[acyl-carrier-protein] dehydratase FabZ (153 aa).

Histidine 52 is a catalytic residue.

The protein belongs to the thioester dehydratase family. FabZ subfamily.

The protein resides in the cytoplasm. It carries out the reaction a (3R)-hydroxyacyl-[ACP] = a (2E)-enoyl-[ACP] + H2O. Its function is as follows. Involved in unsaturated fatty acids biosynthesis. Catalyzes the dehydration of short chain beta-hydroxyacyl-ACPs and long chain saturated and unsaturated beta-hydroxyacyl-ACPs. In Magnetococcus marinus (strain ATCC BAA-1437 / JCM 17883 / MC-1), this protein is 3-hydroxyacyl-[acyl-carrier-protein] dehydratase FabZ.